Here is a 175-residue protein sequence, read N- to C-terminus: DM domain-containing protein mab-23 (175 aa).

The segment at residues 8–56 (CQLCANHGIFNQPKKGHKQKCPYRTCPCSLCALNTKRRALDQIERQLKH) is a DNA-binding region (DM). Positions 58-93 (NEPMTGQTATSMASPTPECPLSPTTPKMTPHTPTSG) are disordered. The span at 59–71 (EPMTGQTATSMAS) shows a compositional bias: polar residues. Residues 81–91 (TTPKMTPHTPT) show a composition bias toward low complexity.

In terms of tissue distribution, expressed in a limited number of non-sex-specific tissues in males, including 6-8 unidentified neurons of the head, ventral body wall muscle, and the PHCL/R neurons.

It is found in the nucleus. Its function is as follows. Probable transcription factor that plays a role in the development of the dopaminergic neurons of the male-specific genital sensilla (simple sense organs) known as rays, by negatively regulating the activity of the transcription factor ast-1. Involved in male mating behavior, probably as a result of a role in the differentiation of male-specific diagonal muscles. Required for development of the male proctodeum. May be dispensable in hermaphrodites. This is DM domain-containing protein mab-23 from Caenorhabditis elegans.